The sequence spans 262 residues: MENDFPLKGKTVLVTRNKAQAASFQQKVEALGGKAVLTSLITFRRALPNDVAEQVREDLAAPGWLVFTSVNGADFFFSYLKENQLILPAHKKIAAVGEKTARRLKMHNVSVDVMPQEYIAEQLADALKQHAEPGETITVMKGNLSRDVIKQELVPLGFEVKEWVLYETIPDEEGIEALKDAAGQYSFDYVTFTSSSTVHTFMHVLGEELKKWKANGTACISIGPLTNDALLTYGITSHTPDTFTIDGMLELMCSMSREEERI.

This sequence belongs to the uroporphyrinogen-III synthase family. In terms of assembly, monomer.

It carries out the reaction hydroxymethylbilane = uroporphyrinogen III + H2O. It participates in porphyrin-containing compound metabolism; protoporphyrin-IX biosynthesis; coproporphyrinogen-III from 5-aminolevulinate: step 3/4. Functionally, catalyzes cyclization of the linear tetrapyrrole, hydroxymethylbilane, to the macrocyclic uroporphyrinogen III. The chain is Uroporphyrinogen-III synthase (hemD) from Bacillus subtilis (strain 168).